A 364-amino-acid chain; its full sequence is Selection and upkeep of intraepithelial T-cells protein 11 (364 aa).

A signal peptide spans 1-28 (MEPSASCLPGFFMVCILLKITVLTQVMS). An Ig-like V-type domain is found at 29-118 (LDIQINTQIP…TNQEKRRSII (90 aa)). The Extracellular portion of the chain corresponds to 29 to 138 (LDIQINTQIP…MSLMSNNLLY (110 aa)). Residues cysteine 48 and cysteine 102 are joined by a disulfide bond. A helical membrane pass occupies residues 139 to 159 (LGIYLIFILFLNFLKGILFCL). At 160 to 186 (TKRLVHFRKRMIKIKKVWSNKTRACCP) the chain is on the cytoplasmic side. Residues 187–207 (LIWEFLEIVLFIAFLPLYLMF) form a helical membrane-spanning segment. Topologically, residues 208 to 230 (RIRVFTLDEAHILYNNWLWKVCK) are extracellular. The helical transmembrane segment at 231–251 (TLIAMMILFTVLILFLLWTLN) threads the bilayer. Over 252–364 (RYGKMPCLSS…LYSKLGNLTH (113 aa)) the chain is Cytoplasmic.

It belongs to the SKINT family. As to expression, expressed in skin and thymus.

The protein localises to the membrane. Functionally, may act by engaging a cell surface molecule on immature T-cells in the embryonic thymus. The sequence is that of Selection and upkeep of intraepithelial T-cells protein 11 (Skint11) from Mus musculus (Mouse).